Here is a 347-residue protein sequence, read N- to C-terminus: Serpentine receptor class beta-2 (347 aa).

Transmembrane regions (helical) follow at residues 27 to 47 (IAQL…YIFL), 62 to 82 (FLLV…AFLF), 108 to 128 (GNLS…GFSI), 146 to 166 (FLGP…LYHV), 194 to 214 (FWEL…FLLV), 246 to 266 (LIVS…TIFV), and 288 to 308 (ITVP…LSFM).

This sequence belongs to the nematode receptor-like protein srb family.

It is found in the membrane. The polypeptide is Serpentine receptor class beta-2 (srb-2) (Caenorhabditis elegans).